We begin with the raw amino-acid sequence, 252 residues long: Coenzyme F420:L-glutamate ligase (252 aa).

GTP-binding positions include 11–14 (MPLV), 45–46 (ET), and Lys-50. A divalent metal cation is bound at residue Asp-115. Asn-118 contributes to the GTP binding site. Positions 156, 157, and 214 each coordinate a divalent metal cation. Residue 212-219 (MGQADEGV) coordinates GTP.

The protein belongs to the CofE family. Homodimer. Mg(2+) serves as cofactor. Mn(2+) is required as a cofactor. The cofactor is K(+).

The enzyme catalyses oxidized coenzyme F420-0 + GTP + L-glutamate = oxidized coenzyme F420-1 + GDP + phosphate + H(+). It catalyses the reaction oxidized coenzyme F420-1 + GTP + L-glutamate = oxidized coenzyme F420-2 + GDP + phosphate + H(+). Its pathway is cofactor biosynthesis; coenzyme F420 biosynthesis. In terms of biological role, catalyzes the GTP-dependent successive addition of two or more gamma-linked L-glutamates to the L-lactyl phosphodiester of 7,8-didemethyl-8-hydroxy-5-deazariboflavin (F420-0) to form coenzyme F420-0-glutamyl-glutamate (F420-2) or polyglutamated F420 derivatives. The sequence is that of Coenzyme F420:L-glutamate ligase from Methanothermobacter thermautotrophicus (strain ATCC 29096 / DSM 1053 / JCM 10044 / NBRC 100330 / Delta H) (Methanobacterium thermoautotrophicum).